Consider the following 154-residue polypeptide: uncharacterized protein (154 aa).

The N-terminal 42 residues, methionine 1–tyrosine 42, are a transit peptide targeting the mitochondrion.

It is found in the mitochondrion. This is an uncharacterized protein from Saccharomyces cerevisiae (strain ATCC 204508 / S288c) (Baker's yeast).